The chain runs to 421 residues: 3-hydroxy-3-methylglutaryl-coenzyme A reductase (421 aa).

Active-site charge relay system residues include Glu109, Lys240, and Asp315. Residue His410 is the Proton donor of the active site.

The protein belongs to the HMG-CoA reductase family.

The enzyme catalyses (R)-mevalonate + 2 NADP(+) + CoA = (3S)-3-hydroxy-3-methylglutaryl-CoA + 2 NADPH + 2 H(+). It participates in metabolic intermediate biosynthesis; (R)-mevalonate biosynthesis; (R)-mevalonate from acetyl-CoA: step 3/3. Converts HMG-CoA to mevalonate. In Aeropyrum pernix (strain ATCC 700893 / DSM 11879 / JCM 9820 / NBRC 100138 / K1), this protein is 3-hydroxy-3-methylglutaryl-coenzyme A reductase (hmgA).